The sequence spans 369 residues: Omega-amidase, chloroplastic (369 aa).

A chloroplast-targeting transit peptide spans 1 to 63 (MKSAISSSLF…SALRSISSSM (63 aa)). Position 64 is an N-acetylalanine (Ala64). The 250-residue stretch at 88-337 (FNIGLCQLSV…EAIIIAEIDY (250 aa)) folds into the CN hydrolase domain. Residue Glu127 is the Proton acceptor of the active site. Lys201 acts as the Proton donor in catalysis. Cys242 (nucleophile) is an active-site residue.

Belongs to the nitrilase superfamily. NIT1/NIT2 family.

It localises to the plastid. Its subcellular location is the chloroplast. The enzyme catalyses a monoamide of a dicarboxylate + H2O = a dicarboxylate + NH4(+). Its function is as follows. Omega-amidase involved in the metabolism of asparagine. Probably also closely coupled with glutamine transamination in the methionine salvage cycle. Can use alpha-ketosuccinamate and alpha-hydroxysuccinamate as substrates, producing respectively oxaloacetate and malate, or alpha-ketoglutaramate, producing alpha-ketoglutarate. This Arabidopsis thaliana (Mouse-ear cress) protein is Omega-amidase, chloroplastic.